Here is a 184-residue protein sequence, read N- to C-terminus: ATP synthase subunit b, chloroplastic (184 aa).

A helical membrane pass occupies residues L27 to L49.

The protein belongs to the ATPase B chain family. In terms of assembly, F-type ATPases have 2 components, F(1) - the catalytic core - and F(0) - the membrane proton channel. F(1) has five subunits: alpha(3), beta(3), gamma(1), delta(1), epsilon(1). F(0) has four main subunits: a(1), b(1), b'(1) and c(10-14). The alpha and beta chains form an alternating ring which encloses part of the gamma chain. F(1) is attached to F(0) by a central stalk formed by the gamma and epsilon chains, while a peripheral stalk is formed by the delta, b and b' chains.

Its subcellular location is the plastid. The protein resides in the chloroplast thylakoid membrane. F(1)F(0) ATP synthase produces ATP from ADP in the presence of a proton or sodium gradient. F-type ATPases consist of two structural domains, F(1) containing the extramembraneous catalytic core and F(0) containing the membrane proton channel, linked together by a central stalk and a peripheral stalk. During catalysis, ATP synthesis in the catalytic domain of F(1) is coupled via a rotary mechanism of the central stalk subunits to proton translocation. In terms of biological role, component of the F(0) channel, it forms part of the peripheral stalk, linking F(1) to F(0). The protein is ATP synthase subunit b, chloroplastic of Morus indica (Mulberry).